The primary structure comprises 610 residues: UvrABC system protein C (610 aa).

One can recognise a GIY-YIG domain in the interval His13–Val91. The UVR domain maps to Gly201–Val236.

Belongs to the UvrC family. Interacts with UvrB in an incision complex.

The protein resides in the cytoplasm. Its function is as follows. The UvrABC repair system catalyzes the recognition and processing of DNA lesions. UvrC both incises the 5' and 3' sides of the lesion. The N-terminal half is responsible for the 3' incision and the C-terminal half is responsible for the 5' incision. This chain is UvrABC system protein C, found in Actinobacillus pleuropneumoniae serotype 7 (strain AP76).